The chain runs to 441 residues: Major capsid protein (441 aa).

A propeptide spanning residues 1 to 51 is cleaved from the precursor; sequence MSKKLVTEEMRTQWLPVLEKKSEQIQPLTAENVSVRLLQNQAEWNAKNLGE.

It localises to the virion. The chain is Major capsid protein from Serratia marcescens (Serratia marcescens bacteriophage KSP90).